A 113-amino-acid polypeptide reads, in one-letter code: Con-Ins G3 (113 aa).

Positions 1–21 (MTTSFYFLLVALGLLLYVCQS) are cleaved as a signal peptide. A propeptide spanning residues 22–29 (SFGNQHTR) is cleaved from the precursor. A 4-hydroxyproline; partial modification is found at Pro-34. Cystine bridges form between Cys-38–Cys-99, Cys-50–Cys-112, and Cys-98–Cys-103. The residue at position 41 (Glu-41) is a 4-carboxyglutamate. Position 51 is a histidine amide (His-51). A propeptide spans 52–92 (GKRNDAGKKRGRASPLWQRQGFLSMLKAKRNEAFFLQRDGR) (c peptide). 4-carboxyglutamate is present on Glu-96. Pro-102 carries the 4-hydroxyproline; partial modification.

The protein belongs to the insulin family. Heterodimer of A and B chains; disulfide-linked. It is noteworthy that in this dimer, in contrast to Con-Ins G1, the chain B is amidated and not the chain A. In terms of tissue distribution, expressed by the venom gland.

The protein localises to the secreted. Functionally, this venom insulin, from a fish-hunting cone snail, facilitates prey capture by rapidly inducing hypoglycemic shock. It is one of the smallest known insulin found in nature and lacks the C-terminal segment of the B chain that, in human insulin, mediates engagement of the insulin receptor (INSR) and assembly of the hormone's hexameric storage form. Despite lacking this segment, it both binds and activates human insulin receptor (long isoform (HIR-B)) with a high potency (EC(50)=242 nM). In vivo, intraperitoneal injection of this peptide into zebrafish lowers blood glucose with a lower potency than human insulin. In addition, when applied to water, this peptide reduces overall locomotor activity of zebrafish larvae, observed as a significant decrease in the percentage of time spent swimming and movement frequency. When tested on a mouse model of diabetes, this insulin also lowers blood glucose with a 10-fold lower potency than human insulin. This Conus geographus (Geography cone) protein is Con-Ins G3.